The following is a 360-amino-acid chain: Mitogen-activated protein kinase 14 (360 aa).

At S2 the chain carries N-acetylserine. The residue at position 2 (S2) is a Phosphoserine. T16 carries the phosphothreonine modification. The Protein kinase domain maps to 24–308; that stretch reads YQNLSPVGSG…AAQALAHAYF (285 aa). ATP is bound by residues 30–38 and K53; that span reads VGSGAYGSV. K53 carries the N6-acetyllysine modification. The Proton acceptor role is filled by D150. Position 152 is an N6-acetyllysine (K152). T180 is modified (phosphothreonine). The short motif at 180 to 182 is the TXY element; sequence TGY. Position 182 is a phosphotyrosine (Y182). Y323 is modified (phosphotyrosine; by ZAP70).

Belongs to the protein kinase superfamily. CMGC Ser/Thr protein kinase family. MAP kinase subfamily. Component of a signaling complex containing at least AKAP13, PKN1, MAPK14, ZAK and MAP2K3. Within this complex, AKAP13 interacts directly with PKN1, which in turn recruits MAPK14, MAP2K3 and ZAK. Binds to a kinase interaction motif within the protein tyrosine phosphatase, PTPRR. This interaction retains MAPK14 in the cytoplasm and prevents nuclear accumulation. Interacts with SPAG9 and GADD45A. Interacts with CDC25B, CDC25C, DUSP1, DUSP10, DUSP16, NP60, SUPT20H and TAB1. Interacts with casein kinase II subunits CSNK2A1 and CSNK2B. Interacts with PPM1D. Interacts with CDK5RAP3; recruits PPM1D to MAPK14 and may regulate its dephosphorylation. Interacts with DUSP2; this interaction does not lead to catalytic activation of DUSP2 and dephosphrylation of MAPK14. Mg(2+) is required as a cofactor. Post-translationally, dually phosphorylated on Thr-180 and Tyr-182 by the MAP2Ks MAP2K3/MKK3, MAP2K4/MKK4 and MAP2K6/MKK6 in response to inflammatory cytokines, environmental stress or growth factors, which activates the enzyme. Dual phosphorylation can also be mediated by TAB1-mediated autophosphorylation. TCR engagement in T-cells also leads to Tyr-323 phosphorylation by ZAP70. Dephosphorylated and inactivated by DUPS1, DUSP10 and DUSP16. PPM1D also mediates dephosphorylation and inactivation of MAPK14. Acetylated at Lys-53 and Lys-152 by KAT2B and EP300. Acetylation at Lys-53 increases the affinity for ATP and enhances kinase activity. Lys-53 and Lys-152 are deacetylated by HDAC3. In terms of processing, ubiquitinated. Ubiquitination leads to degradation by the proteasome pathway.

It is found in the cytoplasm. The protein localises to the nucleus. It carries out the reaction L-seryl-[protein] + ATP = O-phospho-L-seryl-[protein] + ADP + H(+). The catalysed reaction is L-threonyl-[protein] + ATP = O-phospho-L-threonyl-[protein] + ADP + H(+). With respect to regulation, activated by cell stresses such as DNA damage, heat shock, osmotic shock, anisomycin and sodium arsenite, as well as pro-inflammatory stimuli such as bacterial lipopolysaccharide (LPS) and interleukin-1. Activation occurs through dual phosphorylation of Thr-180 and Tyr-182 by either of two dual specificity kinases, MAP2K3/MKK3 or MAP2K6/MKK6, and potentially also MAP2K4/MKK4, as well as by TAB1-mediated autophosphorylation. MAPK14 phosphorylated on both Thr-180 and Tyr-182 is 10-20-fold more active than MAPK14 phosphorylated only on Thr-180, whereas MAPK14 phosphorylated on Tyr-182 alone is inactive. whereas Thr-180 is necessary for catalysis, Tyr-182 may be required for auto-activation and substrate recognition. Phosphorylated at Tyr-323 by ZAP70 in an alternative activation pathway in response to TCR signaling in T-cells. This alternative pathway is inhibited by GADD45A. Inhibited by dual specificity phosphatases, such as DUSP1, DUSP10, and DUSP16. Specifically inhibited by the binding of pyridinyl-imidazole compounds, which are cytokine-suppressive anti-inflammatory drugs (CSAID). SB203580 is an inhibitor of MAPK14. In terms of biological role, serine/threonine kinase which acts as an essential component of the MAP kinase signal transduction pathway. MAPK14 is one of the four p38 MAPKs which play an important role in the cascades of cellular responses evoked by extracellular stimuli such as pro-inflammatory cytokines or physical stress leading to direct activation of transcription factors. Accordingly, p38 MAPKs phosphorylate a broad range of proteins and it has been estimated that they may have approximately 200 to 300 substrates each. Some of the targets are downstream kinases which are activated through phosphorylation and further phosphorylate additional targets. RPS6KA5/MSK1 and RPS6KA4/MSK2 can directly phosphorylate and activate transcription factors such as CREB1, ATF1, the NF-kappa-B isoform RELA/NFKB3, STAT1 and STAT3, but can also phosphorylate histone H3 and the nucleosomal protein HMGN1. RPS6KA5/MSK1 and RPS6KA4/MSK2 play important roles in the rapid induction of immediate-early genes in response to stress or mitogenic stimuli, either by inducing chromatin remodeling or by recruiting the transcription machinery. On the other hand, two other kinase targets, MAPKAPK2/MK2 and MAPKAPK3/MK3, participate in the control of gene expression mostly at the post-transcriptional level, by phosphorylating ZFP36 (tristetraprolin) and ELAVL1, and by regulating EEF2K, which is important for the elongation of mRNA during translation. MKNK1/MNK1 and MKNK2/MNK2, two other kinases activated by p38 MAPKs, regulate protein synthesis by phosphorylating the initiation factor EIF4E2. MAPK14 also interacts with casein kinase II, leading to its activation through autophosphorylation and further phosphorylation of TP53/p53. In the cytoplasm, the p38 MAPK pathway is an important regulator of protein turnover. For example, CFLAR is an inhibitor of TNF-induced apoptosis whose proteasome-mediated degradation is regulated by p38 MAPK phosphorylation. In a similar way, MAPK14 phosphorylates the ubiquitin ligase SIAH2, regulating its activity towards EGLN3. MAPK14 may also inhibit the lysosomal degradation pathway of autophagy by interfering with the intracellular trafficking of the transmembrane protein ATG9. Another function of MAPK14 is to regulate the endocytosis of membrane receptors by different mechanisms that impinge on the small GTPase RAB5A. In addition, clathrin-mediated EGFR internalization induced by inflammatory cytokines and UV irradiation depends on MAPK14-mediated phosphorylation of EGFR itself as well as of RAB5A effectors. Ectodomain shedding of transmembrane proteins is regulated by p38 MAPKs as well. In response to inflammatory stimuli, p38 MAPKs phosphorylate the membrane-associated metalloprotease ADAM17. Such phosphorylation is required for ADAM17-mediated ectodomain shedding of TGF-alpha family ligands, which results in the activation of EGFR signaling and cell proliferation. Another p38 MAPK substrate is FGFR1. FGFR1 can be translocated from the extracellular space into the cytosol and nucleus of target cells, and regulates processes such as rRNA synthesis and cell growth. FGFR1 translocation requires p38 MAPK activation. In the nucleus, many transcription factors are phosphorylated and activated by p38 MAPKs in response to different stimuli. Classical examples include ATF1, ATF2, ATF6, ELK1, PTPRH, DDIT3, TP53/p53 and MEF2C and MEF2A. The p38 MAPKs are emerging as important modulators of gene expression by regulating chromatin modifiers and remodelers. The promoters of several genes involved in the inflammatory response, such as IL6, IL8 and IL12B, display a p38 MAPK-dependent enrichment of histone H3 phosphorylation on 'Ser-10' (H3S10ph) in LPS-stimulated myeloid cells. This phosphorylation enhances the accessibility of the cryptic NF-kappa-B-binding sites marking promoters for increased NF-kappa-B recruitment. Phosphorylates CDC25B and CDC25C which is required for binding to 14-3-3 proteins and leads to initiation of a G2 delay after ultraviolet radiation. Phosphorylates TIAR following DNA damage, releasing TIAR from GADD45A mRNA and preventing mRNA degradation. The p38 MAPKs may also have kinase-independent roles, which are thought to be due to the binding to targets in the absence of phosphorylation. Protein O-Glc-N-acylation catalyzed by the OGT is regulated by MAPK14, and, although OGT does not seem to be phosphorylated by MAPK14, their interaction increases upon MAPK14 activation induced by glucose deprivation. This interaction may regulate OGT activity by recruiting it to specific targets such as neurofilament H, stimulating its O-Glc-N-acylation. Required in mid-fetal development for the growth of embryo-derived blood vessels in the labyrinth layer of the placenta. Also plays an essential role in developmental and stress-induced erythropoiesis, through regulation of EPO gene expression. Phosphorylates S100A9 at 'Thr-113'. The protein is Mitogen-activated protein kinase 14 of Rattus norvegicus (Rat).